Consider the following 82-residue polypeptide: Omega-conotoxin-like TxO6 (82 aa).

Residues 1–22 form the signal peptide; the sequence is MKLTCVVIVAVLFLTAWTLVMA. The propeptide occupies 23 to 50; sequence DDSNNGLANLFSKSRDEMEDPEAAKLEK. Disulfide bonds link Cys-53–Cys-71, Cys-60–Cys-76, and Cys-70–Cys-81.

The protein belongs to the conotoxin O1 superfamily. As to expression, expressed by the venom duct.

The protein resides in the secreted. Its function is as follows. Omega-conotoxins act at presynaptic membranes, they bind and block voltage-gated calcium channels (Cav). The chain is Omega-conotoxin-like TxO6 from Conus textile (Cloth-of-gold cone).